Reading from the N-terminus, the 1824-residue chain is MDRYDMEDVVVAPPAECSSPLKEWRLKRQAGTLDRSDIIEFLKRESPKYFDYQTSATVKDTNVITLKCMFKESLAKEEIIDVVVEFMLGDNPSSALEKLRLEGNTATVCGKVFKNGEPTYSCRECGVDPTCVLCVNCFKRSAHRFHKYKMSTSGGGGCCDCGDDEAWKKDQYCELHLANRKNPLESKILTDAVLERVEICFGAILAFCVSYLEIEPNASLQCLDGNVEGGQVDGAQYCTVLYNDESHTFDQVIQTLTKIAKCRAKDAMEIVAAIDREGRAVVKCDTFEECNKLKVSIENQMILPTSLVSTARNNQSLRTSVLHIGAVACQQFALQLLGWFQEFLVRHYLFRKTFSELVQRKQETFCIRHILEYDVKLWKTARTCWHRLLISGMLMEYDNKMILAQEFSRRYATIVEDFISDDHDHAFSIVSLSVQLFTVPSIAHHLIAHEGIFDKLLHTFYHVAIEKFIRNKTLHFSKNIASLTFFKRANYILYDLRYLLSLKPDVLSNDLRNGFLEGCRALMRVLNVMQGMESMTRQTGQHMDYEPEWECAFNLHIKLATTISQVIDWASGDVKLLRKLYKMTMRALVSNSFIVGGEKVMQPKKVADHVANCLVYDISVQPVSIHLPLSRFFAGIYLHLGAHDLTYDGLQTETEALSIKLTPREIIEPVLCTQAMIAQVGAGLWRRNGYTLLHQLYFYRNVRCRVEMLDRDIACLQIGASLMESNEFLIHVLNRFNTIPWLQENYWSLLSGNEMNDDIIREASIFDEFLELLIVIIGERWMPGVSMVTEEDRLRKEIIQLLCIKPYSHSELSRALPDGNSGNSDNVFEEVINTVAVFKKPVGADSKGVYELKEHLLKEFNMYFYHYTKEDKSKAEELQRERRKAKKQLVCCPPPMLPKLTPAFTPMANILQCPVFLNICSLIMERALNAYSRSFTESHLQKVLHLLGYAIQEELSEHYPFLSFYERSQEYGILEKLEELARCPRLEAHYDFVLWTIERFKQLQAKQAPSDGRAGPSCSQQGTGGKLSLSAEEQAREERENRARLAAERRAHIMAQMQKAQKSFISSNAEMFADTENETRKESASTGPMDWEDIPPEEEQGAVALESKVACLGPDRKFYHGTDDTFKCILCFENCAISRGGRQLVSSAFVQTSRVIFTTPNLRNSQSALHISCCGHVMHYSCWLEYFTNEEFKELRRPHRNRAALAQAANVEFQCPYCRTLSNAIIPVTETLPAFSAPPSPNESYLPLDSFVEIMSTLAIELGNVKDHELTTLPSVSNILRLSGVVGGLAQFERSVQLIKNPPRLHADYIEGIEFLKKALLNTMKIQQSHLKDHPAIESIEMVPILWDSCSYTLQALEIYLYAVEKPLKAELSMRHQSCARNLVRACSRSSALEWETDLPLLPPMRSQAEFSSRLLDTIFNQNDTSVLEWDCFRVLVPFQFGVLNLMVPEKGYKTIIPSGSMFDFYIMQTMFLAQLTKAVLCFDVEKEKAKRAEKAPNSELTQLDYIEQLPSRIRDNMIDFYRRYNIPARVLQKTKQKQLVEEESEENQGHGQTVVIPCESHHLALLLEYVQRQMSSFLRCSCLFYRFLTDVDFPDTFPTDQPDRFDLMCQYLGLDPMLGVYFDMETVYATMMHSFASHPHIDREVEQRCQPDARRSLQVEPCLRPLPRLKVLCDDFSDLINSVSDIFCPNNEREEMKTPTMCLICGLILCGQSYCCQPELGKVSVGACTHHAHACGAEVGIFLRIRDCQVVYLGRGKGCFVPPPYLDEYGETDMGLRRGNPLRLSQAAYRKIYLQWLGHGLHGEIARLNDNANVAAAAQWHHM.

Residues 107–178 (TVCGKVFKNG…KDQYCELHLA (72 aa)) form a UBR-type zinc finger. Disordered regions lie at residues 1006 to 1043 (KQAPSDGRAGPSCSQQGTGGKLSLSAEEQAREERENRA) and 1073 to 1093 (ADTENETRKESASTGPMDWED). A compositionally biased stretch (basic and acidic residues) spans 1033 to 1043 (EQAREERENRA). An RING-type; atypical zinc finger spans residues 1126–1220 (FKCILCFENC…VEFQCPYCRT (95 aa)).

It belongs to the E3 ubiquitin-protein ligase UBR1-like family.

It carries out the reaction S-ubiquitinyl-[E2 ubiquitin-conjugating enzyme]-L-cysteine + [acceptor protein]-L-lysine = [E2 ubiquitin-conjugating enzyme]-L-cysteine + N(6)-ubiquitinyl-[acceptor protein]-L-lysine.. Its pathway is protein modification; protein ubiquitination. Its function is as follows. E3 ubiquitin-protein ligase which is a component of the N-end rule pathway. Recognizes and binds to proteins bearing specific N-terminal residues that are destabilizing according to the N-end rule, leading to their ubiquitination and subsequent degradation. In Drosophila melanogaster (Fruit fly), this protein is E3 ubiquitin-protein ligase UBR1.